The sequence spans 321 residues: Olfactory receptor 56B34 (321 aa).

At 1–36 the chain is on the extracellular side; that stretch reads MGTALHETNSSEVHVSEFILLGFPGIHEFQIWLSLP. A helical transmembrane segment spans residues 37–57; the sequence is MALLYIVALGANLLILITIYL. Over 58-70 the chain is Cytoplasmic; the sequence is EPTLHQPMYQFLG. The chain crosses the membrane as a helical span at residues 71–91; sequence ILAAVDIGLATTSMPKILAIL. Topologically, residues 92 to 105 are extracellular; the sequence is WFDAKTISLPECFA. Cys103 and Cys185 form a disulfide bridge. Residues 106–126 form a helical membrane-spanning segment; that stretch reads QIYAIHTFMCMESGVFLCMAI. Residues 127-128 lie on the Cytoplasmic side of the membrane; that stretch reads DR. Residues 129–149 form a helical membrane-spanning segment; the sequence is YVAICYPLQYPSIVTEAFVIK. The Extracellular segment spans residues 150 to 207; the sequence is ATLSMLLRNGLLTIPVPVLAAQRQYCSRNEIDHCLCSNLGVISLACDDITVNRFYQLA. A helical transmembrane segment spans residues 208 to 228; that stretch reads LAWLVVGSDMILVYASYALII. The Cytoplasmic portion of the chain corresponds to 229 to 250; the sequence is RSVLRLNSTEAASKALSTCSSH. A helical transmembrane segment spans residues 251–271; it reads LILIMFYYTAIVIVSVTHLAG. Residues 272-275 lie on the Extracellular side of the membrane; the sequence is RRVP. A helical transmembrane segment spans residues 276-296; the sequence is LIPVLLNVMHIVIPPSLNPVV. The Cytoplasmic segment spans residues 297 to 321; that stretch reads YALRTQELKVGFRKVFSLSEFVSRK.

The protein belongs to the G-protein coupled receptor 1 family.

It localises to the cell membrane. In terms of biological role, odorant receptor. This Mus musculus (Mouse) protein is Olfactory receptor 56B34.